The primary structure comprises 141 residues: Hemoglobin subunit alpha-1 (141 aa).

In terms of domain architecture, Globin spans valine 1 to arginine 141. Histidine 58 serves as a coordination point for O2. Histidine 87 serves as a coordination point for heme b.

It belongs to the globin family. As to quaternary structure, heterotetramer of two alpha chains and two beta chains. As to expression, red blood cells.

Its function is as follows. Involved in oxygen transport from the lung to the various peripheral tissues. The polypeptide is Hemoglobin subunit alpha-1 (Naja naja (Indian cobra)).